The sequence spans 538 residues: Syncytin-2 (538 aa).

The first 15 residues, 1-15 (MGLLLLVLILTPSLA), serve as a signal peptide directing secretion. The Extracellular segment spans residues 16–478 (AYRHPDFPLL…GWLNWEGTWK (463 aa)). The CXXC motif lies at 43–46 (CWLC). 3 disulfide bridges follow: Cys-43-Cys-46, Cys-43-Cys-439, and Cys-431-Cys-438. N-linked (GlcNAc...) asparagine glycans are attached at residues Asn-133, Asn-146, Asn-177, Asn-220, Asn-241, Asn-247, Asn-312, and Asn-332. The interval 354 to 374 (FIPLLAGLGILAGTGTGIAGI) is fusion peptide. The CKS-17 signature appears at 414-430 (LQNRRGLDMLTAAQGGI). Residues 431-439 (CLALDEKCC) carry the CX6CC motif. Asn-443 carries an N-linked (GlcNAc...) asparagine glycan. The helical transmembrane segment at 479–499 (WFSWVLPLTGPLVSLLLLLLF) threads the bilayer. The Cytoplasmic segment spans residues 500-538 (GPCLLNLITQFVSSRLQAIKLQTNLSAGRHPRNIQESPF).

Belongs to the gamma type-C retroviral envelope protein family. HERV class-I FRD env subfamily. The surface and transmembrane proteins form a heterodimer. They are attached by non-covalent interactions or by a labile interchain disulfide bond. Post-translationally, specific enzymatic cleavages in vivo yield the mature SU and TM proteins. The CXXC motif is highly conserved across a broad range of retroviral envelope proteins. It is thought to participate in the formation of a labile disulfide bond possibly with the CX6CC motif present in the transmembrane protein.

Its subcellular location is the virion. The protein resides in the cell membrane. This endogenous retroviral envelope protein has retained its original fusogenic properties and participates in trophoblast fusion and the formation of a syncytium during placenta morphogenesis. The interaction with MFSD2A is apparently important for this process. Its function is as follows. Endogenous envelope proteins may have kept, lost or modified their original function during evolution but this one can still make pseudotypes with MLV, HIV-1 or SIV-1 virions and confer infectivity. Retroviral envelope proteins mediate receptor recognition and membrane fusion during early infection. The surface protein mediates receptor recognition, while the transmembrane protein anchors the envelope heterodimer to the viral membrane through one transmembrane domain. The other hydrophobic domain, called fusion peptide, mediates fusion of the viral membrane with the target cell membrane. The protein is Syncytin-2 (ERVFRD-1) of Pan troglodytes (Chimpanzee).